Reading from the N-terminus, the 166-residue chain is UPF0561 protein C2orf68 homolog (166 aa).

Basic and acidic residues predominate over residues 32-49; the sequence is NQLDRDDYDKKVKQAAKE. Residues 32-107 form a disordered region; the sequence is NQLDRDDYDK…SELEPPGRQL (76 aa). Positions 91–101 are enriched in low complexity; that stretch reads ESSSSGSSELE.

Belongs to the UPF0561 family.

This Mus musculus (Mouse) protein is UPF0561 protein C2orf68 homolog.